Reading from the N-terminus, the 94-residue chain is Adaptation to cold protein J (94 aa).

The region spanning Asn3 to Tyr93 is the J domain. Residues Asn74–Pro94 are essential for interaction with AtcC.

In terms of assembly, interacts via its C-terminal extension with AtcC. Does not interact with AtcA and AtcB.

Involved in cold adaptation. The J-domain is functional and can stimulate the ATPase activity of the DnaK chaperone. May work as a co-chaperone of the DnaK system to support cold resistance. The polypeptide is Adaptation to cold protein J (Shewanella oneidensis (strain ATCC 700550 / JCM 31522 / CIP 106686 / LMG 19005 / NCIMB 14063 / MR-1)).